The following is a 421-amino-acid chain: Fumarylacetoacetase (421 aa).

Residue aspartate 131 participates in Ca(2+) binding. Catalysis depends on histidine 138, which acts as the Proton acceptor. Arginine 147 serves as a coordination point for substrate. Glutamate 204, glutamate 206, and aspartate 238 together coordinate Ca(2+). Aspartate 238 contributes to the Mg(2+) binding site. Residues glutamine 245 and tyrosine 249 each contribute to the substrate site. 2 residues coordinate Mg(2+): lysine 258 and threonine 262. Residue threonine 355 coordinates substrate.

Belongs to the FAH family. Requires Ca(2+) as cofactor. The cofactor is Mg(2+).

It carries out the reaction 4-fumarylacetoacetate + H2O = acetoacetate + fumarate + H(+). It participates in amino-acid degradation; L-phenylalanine degradation; acetoacetate and fumarate from L-phenylalanine: step 6/6. In terms of biological role, converts fumarylacetoacetate to acetoacetate and fumarate. Involved in tyrosine catabolic pathway. Catalyzes the final step in the tyrosine degradation pathway. In Arabidopsis thaliana (Mouse-ear cress), this protein is Fumarylacetoacetase.